A 189-amino-acid polypeptide reads, in one-letter code: MTSSAGQGGGALSTRGGAATKRMKWAVELSLGNSRSRSDRQGKDGDVMYPVGYSDKPVPDTSVQEADRNLVEKRCWDVALGPLKQIPMNLFIMYMSGNTISIFPIMMVCMMAWRPIQALMSMSATFKLLESSSQQWLQGLVYLIGNLLGSALAIYKCQSMGLLPTHSSDWLAFIEPPQRLEIMGGGMVM.

A compositionally biased stretch (gly residues) spans 1-11; the sequence is MTSSAGQGGGA. Disordered stretches follow at residues 1 to 20 and 30 to 63; these read MTSS…GAAT and SLGN…DTSV. Over 1 to 72 the chain is Cytoplasmic; sequence MTSSAGQGGG…VQEADRNLVE (72 aa). The segment covering 36–46 has biased composition (basic and acidic residues); sequence SRSDRQGKDGD. A helical transmembrane segment spans residues 73–93; it reads KRCWDVALGPLKQIPMNLFIM. Residues 94–104 are Lumenal-facing; that stretch reads YMSGNTISIFP. Residues 105–126 form a helical membrane-spanning segment; that stretch reads IMMVCMMAWRPIQALMSMSATF. Topologically, residues 127–133 are cytoplasmic; sequence KLLESSS. The helical transmembrane segment at 134–154 threads the bilayer; sequence QQWLQGLVYLIGNLLGSALAI. The Lumenal portion of the chain corresponds to 155 to 189; sequence YKCQSMGLLPTHSSDWLAFIEPPQRLEIMGGGMVM.

The protein belongs to the EMC4 family. Component of the ER membrane protein complex (EMC).

It is found in the endoplasmic reticulum membrane. In terms of biological role, part of the endoplasmic reticulum membrane protein complex (EMC) that enables the energy-independent insertion into endoplasmic reticulum membranes of newly synthesized membrane proteins. Preferentially accommodates proteins with transmembrane domains that are weakly hydrophobic or contain destabilizing features such as charged and aromatic residues. Involved in the cotranslational insertion of multi-pass membrane proteins in which stop-transfer membrane-anchor sequences become ER membrane spanning helices. It is also required for the post-translational insertion of tail-anchored/TA proteins in endoplasmic reticulum membranes. By mediating the proper cotranslational insertion of N-terminal transmembrane domains in an N-exo topology, with translocated N-terminus in the lumen of the ER, controls the topology of multi-pass membrane proteins like the G protein-coupled receptors. By regulating the insertion of various proteins in membranes, it is indirectly involved in many cellular processes. The chain is ER membrane protein complex subunit 4 (emc4) from Danio rerio (Zebrafish).